Here is an 831-residue protein sequence, read N- to C-terminus: Prickle-like protein 1 (831 aa).

The 109-residue stretch at 14–122 folds into the PET domain; it reads FGCQRSSTSD…TIKLLSRAMM (109 aa). 3 consecutive LIM zinc-binding domains span residues 124–189, 189–249, and 249–313; these read AVCE…LLKP, PRCS…LYAE, and EYCE…EDIH. A disordered region spans residues 314–346; sequence ASDSSDSAFQSARSRDSRRSVRMGRSSRSADQC. A phosphoserine mark is found at S315, S591, and S594. Disordered regions lie at residues 664 to 688 and 763 to 831; these read EERGSRPHHHRHRRSRKSRSDNALN and CSSS…CIIS. Over residues 669–680 the composition is skewed to basic residues; that stretch reads RPHHHRHRRSRK. A Phosphoserine modification is found at S683. Polar residues predominate over residues 797–812; that stretch reads DLSSPASALPTPQFNQ. The segment covering 815–831 has biased composition (basic residues); that stretch reads TKSKKKKGHRGKNCIIS. Position 828 is a cysteine methyl ester (C828). C828 carries the S-farnesyl cysteine lipid modification. Residues 829 to 831 constitute a propeptide, removed in mature form; it reads IIS.

Belongs to the prickle / espinas / testin family. As to quaternary structure, interacts with REST.

Its subcellular location is the nucleus membrane. The protein localises to the cytoplasm. It localises to the cytosol. In terms of biological role, involved in the planar cell polarity pathway that controls convergent extension during gastrulation and neural tube closure. Convergent extension is a complex morphogenetic process during which cells elongate, move mediolaterally, and intercalate between neighboring cells, leading to convergence toward the mediolateral axis and extension along the anteroposterior axis. Necessary for nuclear localization of REST. May serve as nuclear receptor. In Rattus norvegicus (Rat), this protein is Prickle-like protein 1 (Prickle1).